The following is a 360-amino-acid chain: Peptide chain release factor 1 (360 aa).

Residue Gln235 is modified to N5-methylglutamine. Positions 281–310 (AERQRQDAAQAESRRLQVGSGDRSQRIRTY) are disordered.

It belongs to the prokaryotic/mitochondrial release factor family. In terms of processing, methylated by PrmC. Methylation increases the termination efficiency of RF1.

The protein localises to the cytoplasm. Its function is as follows. Peptide chain release factor 1 directs the termination of translation in response to the peptide chain termination codons UAG and UAA. The polypeptide is Peptide chain release factor 1 (Stenotrophomonas maltophilia (strain R551-3)).